We begin with the raw amino-acid sequence, 389 residues long: Indole-3-acetate monooxygenase (389 aa).

It belongs to the HpaH/HsaA monooxygenase family.

The catalysed reaction is (indol-3-yl)acetate + NADH + O2 + H(+) = 2-hydroxy-(1H-indol-3-yl)acetate + NAD(+) + H2O. It catalyses the reaction indole + NADH + O2 + H(+) = indoxyl + NAD(+) + H2O. Functionally, involved in the degradation of the plant hormone indole-3-acetic acid (IAA). Catalyzes the first step of the pathway, the conversion of IAA to 2-hydroxy-IAA (2-OH-IAA). Can also convert indole to indoxyl, which spontaneously dimerizes in the presence of oxygen to form the blue pigment indigo. The polypeptide is Indole-3-acetate monooxygenase (Acinetobacter baumannii (strain ATCC 19606 / DSM 30007 / JCM 6841 / CCUG 19606 / CIP 70.34 / NBRC 109757 / NCIMB 12457 / NCTC 12156 / 81)).